The chain runs to 442 residues: Protein trichome birefringence-like 26 (442 aa).

The helical; Signal-anchor for type II membrane protein transmembrane segment at 51–71 threads the bilayer; sequence FFLYFSLVALAYYFIISSLAV. The short motif at 164–166 is the GDS motif element; sequence GDS. The DCXHWCLPGXXDXWN motif motif lies at 409-423; sequence DCLHWCLPGPIDSWN.

This sequence belongs to the PC-esterase family. TBL subfamily.

It is found in the membrane. Its function is as follows. May be involved in the O-acetylation of mannan. May act as a bridging protein that binds pectin and other cell wall polysaccharides. Probably involved in maintaining esterification of pectins. This Arabidopsis thaliana (Mouse-ear cress) protein is Protein trichome birefringence-like 26 (TBL26).